Reading from the N-terminus, the 591-residue chain is CTP synthase (591 aa).

Residues 1–281 (MPQSRTHSRT…DAYVVRQLGL (281 aa)) form an amidoligase domain region. S23 is a CTP binding site. Residue S23 coordinates UTP. Residues 24-29 (SLGKGL) and D81 contribute to the ATP site. 2 residues coordinate Mg(2+): D81 and E155. CTP is bound by residues 162–164 (DIE), 202–207 (KTKPTQ), and K238. Residues 202–207 (KTKPTQ) and K238 each bind UTP. One can recognise a Glutamine amidotransferase type-1 domain in the interval 306 to 554 (RIALVGKYVD…VDAALKHKLE (249 aa)). G369 serves as a coordination point for L-glutamine. The active-site Nucleophile; for glutamine hydrolysis is the C396. Residues 397 to 400 (LGLQ), E419, and R480 each bind L-glutamine. Residues H527 and E529 contribute to the active site. The tract at residues 568-591 (AVATDDELADSADRDEVASVDSAG) is disordered.

The protein belongs to the CTP synthase family. In terms of assembly, homotetramer.

It catalyses the reaction UTP + L-glutamine + ATP + H2O = CTP + L-glutamate + ADP + phosphate + 2 H(+). The catalysed reaction is L-glutamine + H2O = L-glutamate + NH4(+). The enzyme catalyses UTP + NH4(+) + ATP = CTP + ADP + phosphate + 2 H(+). The protein operates within pyrimidine metabolism; CTP biosynthesis via de novo pathway; CTP from UDP: step 2/2. With respect to regulation, allosterically activated by GTP, when glutamine is the substrate; GTP has no effect on the reaction when ammonia is the substrate. The allosteric effector GTP functions by stabilizing the protein conformation that binds the tetrahedral intermediate(s) formed during glutamine hydrolysis. Inhibited by the product CTP, via allosteric rather than competitive inhibition. In terms of biological role, catalyzes the ATP-dependent amination of UTP to CTP with either L-glutamine or ammonia as the source of nitrogen. Regulates intracellular CTP levels through interactions with the four ribonucleotide triphosphates. This Rhodococcus jostii (strain RHA1) protein is CTP synthase.